The sequence spans 620 residues: Probable potassium transport system protein Kup 2 (620 aa).

12 helical membrane passes run 10 to 30, 50 to 70, 102 to 122, 136 to 156, 168 to 188, 211 to 231, 246 to 266, 284 to 304, 336 to 356, 368 to 388, 393 to 413, and 415 to 435; these read LLVS…LYAL, VLSL…VIVI, MMLG…TPAI, PDLR…LFAI, FGPV…VNVI, LMSF…EALY, WFCL…ALLI, MVVP…QAVI, IYVP…VVGF, IAVT…MALL, MALV…FFSA, and IIKV…SFTV.

The protein belongs to the HAK/KUP transporter (TC 2.A.72) family.

It localises to the cell inner membrane. It catalyses the reaction K(+)(in) + H(+)(in) = K(+)(out) + H(+)(out). In terms of biological role, transport of potassium into the cell. Likely operates as a K(+):H(+) symporter. This is Probable potassium transport system protein Kup 2 from Rhodopseudomonas palustris (strain BisB5).